We begin with the raw amino-acid sequence, 245 residues long: Tryptophan synthase alpha chain (245 aa).

Active-site proton acceptor residues include E37 and D48.

Belongs to the TrpA family. As to quaternary structure, tetramer of two alpha and two beta chains.

The enzyme catalyses (1S,2R)-1-C-(indol-3-yl)glycerol 3-phosphate + L-serine = D-glyceraldehyde 3-phosphate + L-tryptophan + H2O. It functions in the pathway amino-acid biosynthesis; L-tryptophan biosynthesis; L-tryptophan from chorismate: step 5/5. Functionally, the alpha subunit is responsible for the aldol cleavage of indoleglycerol phosphate to indole and glyceraldehyde 3-phosphate. The polypeptide is Tryptophan synthase alpha chain (Saccharolobus solfataricus (strain ATCC 35092 / DSM 1617 / JCM 11322 / P2) (Sulfolobus solfataricus)).